Here is a 436-residue protein sequence, read N- to C-terminus: Histidine--tRNA ligase (436 aa).

The protein belongs to the class-II aminoacyl-tRNA synthetase family. In terms of assembly, homodimer.

It localises to the cytoplasm. The catalysed reaction is tRNA(His) + L-histidine + ATP = L-histidyl-tRNA(His) + AMP + diphosphate + H(+). The chain is Histidine--tRNA ligase from Prochlorococcus marinus (strain MIT 9303).